Here is a 436-residue protein sequence, read N- to C-terminus: Methionine aminopeptidase 2 (436 aa).

Residues 1-61 are disordered; sequence MSEIQPKTEV…KKKKAAPVAS (61 aa). Positions 16 to 26 are enriched in acidic residues; it reads EEEEESDDEED. The segment covering 44-56 has biased composition (basic residues); the sequence is KKKKKKNKKKKKA. A substrate-binding site is contributed by His191. Residues Asp211, Asp222, and His291 each contribute to the a divalent metal cation site. His299 contributes to the substrate binding site. The a divalent metal cation site is built by Glu324 and Glu417.

It belongs to the peptidase M24A family. Methionine aminopeptidase eukaryotic type 2 subfamily. Co(2+) is required as a cofactor. It depends on Zn(2+) as a cofactor. Mn(2+) serves as cofactor. The cofactor is Fe(2+).

Its subcellular location is the cytoplasm. The enzyme catalyses Release of N-terminal amino acids, preferentially methionine, from peptides and arylamides.. Its function is as follows. Cotranslationally removes the N-terminal methionine from nascent proteins. The N-terminal methionine is often cleaved when the second residue in the primary sequence is small and uncharged (Met-Ala-, Cys, Gly, Pro, Ser, Thr, or Val). This is Methionine aminopeptidase 2 (metap2) from Dictyostelium discoideum (Social amoeba).